The following is a 280-amino-acid chain: Urease accessory protein UreD 3 (280 aa).

Belongs to the UreD family. UreD, UreF and UreG form a complex that acts as a GTP-hydrolysis-dependent molecular chaperone, activating the urease apoprotein by helping to assemble the nickel containing metallocenter of UreC. The UreE protein probably delivers the nickel.

It localises to the cytoplasm. Its function is as follows. Required for maturation of urease via the functional incorporation of the urease nickel metallocenter. This is Urease accessory protein UreD 3 from Bradyrhizobium sp. (strain ORS 278).